A 196-amino-acid polypeptide reads, in one-letter code: Putative 3-methyladenine DNA glycosylase (196 aa).

It belongs to the DNA glycosylase MPG family.

The polypeptide is Putative 3-methyladenine DNA glycosylase (yxlJ) (Bacillus subtilis (strain 168)).